Here is a 357-residue protein sequence, read N- to C-terminus: UPF0283 membrane protein HSM_0945 (357 aa).

3 helical membrane-spanning segments follow: residues 67 to 87 (LMAT…QWLV), 96 to 116 (IAFV…GTII), and 213 to 233 (AVES…MFFI).

This sequence belongs to the UPF0283 family.

It localises to the cell inner membrane. This chain is UPF0283 membrane protein HSM_0945, found in Histophilus somni (strain 2336) (Haemophilus somnus).